A 120-amino-acid chain; its full sequence is UPF0382 membrane protein SSP2132 (120 aa).

4 helical membrane-spanning segments follow: residues 3–23, 46–66, 69–89, and 94–114; these read VFIILGALNAMMAVGTGAFGA, MYHGLGLLAIGIISGTTSINV, VGWLLFFGIVFFSGSLYILAL, and IIGAITPIGGVLFIVGWLMLV.

The protein belongs to the UPF0382 family.

Its subcellular location is the cell membrane. The protein is UPF0382 membrane protein SSP2132 of Staphylococcus saprophyticus subsp. saprophyticus (strain ATCC 15305 / DSM 20229 / NCIMB 8711 / NCTC 7292 / S-41).